A 255-amino-acid polypeptide reads, in one-letter code: Taurine import ATP-binding protein TauB (255 aa).

The 228-residue stretch at 2-229 (LQISHLYADY…RFVAGESSRS (228 aa)) folds into the ABC transporter domain. 34 to 41 (GPSGCGKT) lines the ATP pocket.

The protein belongs to the ABC transporter superfamily. Taurine importer (TC 3.A.1.17.1) family. In terms of assembly, the complex is composed of two ATP-binding proteins (TauB), two transmembrane proteins (TauC) and a solute-binding protein (TauA).

The protein resides in the cell inner membrane. The enzyme catalyses taurine(out) + ATP + H2O = taurine(in) + ADP + phosphate + H(+). In terms of biological role, part of the ABC transporter complex TauABC involved in taurine import. Responsible for energy coupling to the transport system. In Escherichia coli O157:H7, this protein is Taurine import ATP-binding protein TauB.